The following is a 70-amino-acid chain: U2-agatoxin-Ao1r (70 aa).

The first 20 residues, 1-20, serve as a signal peptide directing secretion; sequence MRSIISLILISAMVFSMIAP. The propeptide occupies 21-34; it reads VPEEERLQLSEDER. 3 cysteine pairs are disulfide-bonded: cysteine 37/cysteine 53, cysteine 44/cysteine 58, and cysteine 52/cysteine 68. Leucine amide is present on leucine 69.

It belongs to the neurotoxin 01 (U2-agtx) family. Expressed by the venom gland.

It is found in the secreted. In terms of biological role, insect active toxin causing rapid but reversible paralysis in crickets. No activity shown in mammals. Does not show effect on mammalian voltage-gated calcium channels. This is U2-agatoxin-Ao1r from Agelena orientalis (Funnel-web spider).